A 72-amino-acid polypeptide reads, in one-letter code: Translation initiation factor IF-1 (72 aa).

An S1-like domain is found at 1–72 (MAREDHIEME…SKGRIVYRAR (72 aa)).

Belongs to the IF-1 family. As to quaternary structure, component of the 30S ribosomal translation pre-initiation complex which assembles on the 30S ribosome in the order IF-2 and IF-3, IF-1 and N-formylmethionyl-tRNA(fMet); mRNA recruitment can occur at any time during PIC assembly.

Its subcellular location is the cytoplasm. One of the essential components for the initiation of protein synthesis. Stabilizes the binding of IF-2 and IF-3 on the 30S subunit to which N-formylmethionyl-tRNA(fMet) subsequently binds. Helps modulate mRNA selection, yielding the 30S pre-initiation complex (PIC). Upon addition of the 50S ribosomal subunit IF-1, IF-2 and IF-3 are released leaving the mature 70S translation initiation complex. This is Translation initiation factor IF-1 from Chromohalobacter salexigens (strain ATCC BAA-138 / DSM 3043 / CIP 106854 / NCIMB 13768 / 1H11).